A 277-amino-acid chain; its full sequence is Putative phosphoenolpyruvate synthase regulatory protein (277 aa).

152–159 (GVSRCGKT) provides a ligand contact to ADP.

It belongs to the pyruvate, phosphate/water dikinase regulatory protein family. PSRP subfamily.

It catalyses the reaction [pyruvate, water dikinase] + ADP = [pyruvate, water dikinase]-phosphate + AMP + H(+). The catalysed reaction is [pyruvate, water dikinase]-phosphate + phosphate + H(+) = [pyruvate, water dikinase] + diphosphate. In terms of biological role, bifunctional serine/threonine kinase and phosphorylase involved in the regulation of the phosphoenolpyruvate synthase (PEPS) by catalyzing its phosphorylation/dephosphorylation. The protein is Putative phosphoenolpyruvate synthase regulatory protein of Chromohalobacter salexigens (strain ATCC BAA-138 / DSM 3043 / CIP 106854 / NCIMB 13768 / 1H11).